The primary structure comprises 475 residues: MMNDGKQQSTFLFHDYETFGTHPALDRPAQFAAIRTDSEFNVIGEPEVFYCKPADDYLPQPGAVLITGITPQEARAKGENEAAFAARIHSLFTVPKTCILGYNNVRFDDEVTRNIFYRNFYDPYAWSWQHDNSRWDLLDVMRACYALRPEGINWPENDDGLPSFRLEHLTKANGIEHSNAHDAMADVYATIAMAKLVKTRQPRLFDYLFTHRNKHKLMALIDVPQMKPLVHVSGMFGAWRGNTSWVAPLAWHPENRNAVIMVDLAGDISPLLELDSDTLRERLYTAKTDLGDNAAVPVKLVHINKCPVLAQANTLRPEDADRLGINRQHCLDNLKILRENPQVREKVVAIFAEAEPFTPSDNVDAQLYNGFFSDADRAAMKIVLETEPRNLPALDITFVDKRIEKLLFNYRARNFPGTLDYAEQQRWLEHRRQVFTPEFLQGYADELQMLVQQYADDKEKVALLKALWQYAEEIV.

One can recognise an Exonuclease domain in the interval phenylalanine 13–alanine 192. 2 residues coordinate Mg(2+): aspartate 15 and glutamate 17. Substrate-binding residues include glutamate 17 and arginine 165. Aspartate 186 provides a ligand contact to Mg(2+). The ExoI SH3-like domain maps to proline 202–glutamate 355. Residues threonine 358–valine 475 enclose the ExoI C-terminal domain.

As to quaternary structure, monomer. Interacts with ssb (via C-terminus); this interaction stimulates the exonuclease activity by recruiting the enzyme to its substrate. Requires Mg(2+) as cofactor.

The enzyme catalyses Exonucleolytic cleavage in the 3'- to 5'-direction to yield nucleoside 5'-phosphates.. Inhibited by 10 mM EDTA. In terms of biological role, degrades single-stranded DNA (ssDNA) in a highly processive manner. Also functions as a DNA deoxyribophosphodiesterase that releases deoxyribose-phosphate moieties following the cleavage of DNA at an apurinic/apyrimidinic (AP) site by either an AP endonuclease or AP lyase. The chain is Exodeoxyribonuclease I (sbcB) from Escherichia coli (strain K12).